A 266-amino-acid chain; its full sequence is Vitamin B12-binding protein (266 aa).

The first 22 residues, 1–22 (MAKQMFRALGALLLTLPVWLYA), serve as a signal peptide directing secretion. The Fe/B12 periplasmic-binding domain maps to 25–266 (RVITLSPANT…QLCNALSQVN (242 aa)). Residues Tyr50 and 242-246 (DWFER) contribute to the cyanocob(III)alamin site. Cysteines 183 and 259 form a disulfide.

This sequence belongs to the BtuF family. The complex is composed of two ATP-binding proteins (BtuD), two transmembrane proteins (BtuC) and a solute-binding protein (BtuF).

Its subcellular location is the periplasm. Functionally, part of the ABC transporter complex BtuCDF involved in vitamin B12 import. Binds vitamin B12 and delivers it to the periplasmic surface of BtuC. The protein is Vitamin B12-binding protein of Salmonella typhi.